The following is a 551-amino-acid chain: HTH-type transcriptional regulator SgrR (551 aa).

The region spanning 1 to 116 (MPSARLQQQF…LVSHLGRSFR (116 aa)) is the HTH marR-type domain. A DNA-binding region (H-T-H motif) is located at residues 26–49 (LNELAALLSCSRRHMRTLLNTMQD). The segment at 163 to 492 (ELEADIAHHW…IDWQADAARW (330 aa)) is solute-binding.

Functionally, activates the small RNA gene sgrS under glucose-phosphate stress conditions as well as yfdZ. Represses its own transcription under both stress and non-stress conditions. Might act as a sensor of the intracellular accumulation of phosphoglucose by binding these molecules in its C-terminal solute-binding domain. This chain is HTH-type transcriptional regulator SgrR, found in Shigella boydii serotype 4 (strain Sb227).